The following is a 1045-amino-acid chain: FERM, ARHGEF and pleckstrin domain-containing protein 1 (1045 aa).

The segment at 1 to 37 (MGEIEQRPTPGSRLGAPENSGISTLERGQKPPPTPSG) is disordered. Residues Ser-20 and Ser-23 each carry the phosphoserine modification. A Phosphothreonine modification is found at Thr-24. The FERM domain maps to 40-320 (VSIKIQMLDD…EHHAFFRLFE (281 aa)). Ser-340, Ser-373, Ser-389, Ser-403, Ser-418, Ser-427, and Ser-433 each carry phosphoserine. The interval 361–534 (FERKHSKIHS…TDDEDEGRRK (174 aa)) is disordered. Polar residues predominate over residues 373-396 (SLASQPTELNSEVLEQSQQSTSLT). 2 stretches are compositionally biased toward polar residues: residues 471-489 (TGSL…NSQG) and 496-511 (VTLS…QASP). 2 positions are modified to phosphoserine: Ser-510 and Ser-514. One can recognise a DH domain in the interval 540–730 (KAYFIAKEVS…TEMVAQLHGT (191 aa)). The PH 1 domain occupies 759–856 (EFIRLGSLSK…WVEDIQMAID (98 aa)). 3 positions are modified to phosphoserine: Ser-833, Ser-872, and Ser-878. The segment at 864 to 903 (PAPEFLASSPPDNKSPDEATAADQESEDDLSASRTSLERQ) is disordered. Phosphothreonine is present on Thr-883. A phosphoserine mark is found at Ser-889, Ser-896, and Ser-899. The PH 2 domain occupies 932-1029 (ENQLSGNLLR…WMEVIRSATS (98 aa)).

As to quaternary structure, interacts with CADM1. Interacts with RAC1. In terms of tissue distribution, detected in cAMP-treated chondrocytes, but not in untreated chondrocytes. Detected in fetal brain, heart and spleen, and in adult testis, kidney and lung.

It is found in the cell membrane. The protein resides in the synapse. Its subcellular location is the synaptosome. The protein localises to the cytoplasm. It localises to the cytosol. It is found in the cell projection. The protein resides in the filopodium. Its subcellular location is the dendrite. The protein localises to the dendritic spine. Functionally, functions as a guanine nucleotide exchange factor for RAC1. May play a role in semaphorin signaling. Plays a role in the assembly and disassembly of dendritic filopodia, the formation of dendritic spines, regulation of dendrite length and ultimately the formation of synapses. The protein is FERM, ARHGEF and pleckstrin domain-containing protein 1 (FARP1) of Homo sapiens (Human).